A 256-amino-acid chain; its full sequence is Carboxysome shell protein CsoS1D (256 aa).

The disordered stretch occupies residues 1-24; it reads MEPTSSLNRGDRKKGSSLVTGSEV. 2 BMC circularly permuted domains span residues 55-157 and 158-256; these read ELRT…RTKP and STSW…ISNY. Residues 120 to 121 carry the Gates the pore motif; sequence ER.

The protein belongs to the EutL/PduB family. As to quaternary structure, homotrimer. Forms a dimer of stacked trimers, the same faces interact. A CsoS1-CsoS1D-CsoS2 complex can be isolated following expression in E.coli.

Its subcellular location is the carboxysome. Its function is as follows. Part of the carboxysome shell, a polyhedral inclusion where RuBisCO (ribulose bisphosphate carboxylase, cbbL-cbbS) is sequestered. It may control transport of RuBisCO reactants in and out of the carboxysome. There are estimated to be 6 CsoS1D hexamers per carboxysome. This chain is Carboxysome shell protein CsoS1D, found in Prochlorococcus marinus subsp. pastoris (strain CCMP1986 / NIES-2087 / MED4).